A 151-amino-acid polypeptide reads, in one-letter code: 3-hydroxyacyl-[acyl-carrier-protein] dehydratase FabZ (151 aa).

The active site involves His-56.

This sequence belongs to the thioester dehydratase family. FabZ subfamily.

The protein resides in the cytoplasm. It carries out the reaction a (3R)-hydroxyacyl-[ACP] = a (2E)-enoyl-[ACP] + H2O. Its function is as follows. Involved in unsaturated fatty acids biosynthesis. Catalyzes the dehydration of short chain beta-hydroxyacyl-ACPs and long chain saturated and unsaturated beta-hydroxyacyl-ACPs. The chain is 3-hydroxyacyl-[acyl-carrier-protein] dehydratase FabZ from Rhodopseudomonas palustris (strain HaA2).